The following is a 547-amino-acid chain: Glucose-6-phosphate isomerase 1 (547 aa).

The Proton donor role is filled by glutamate 353. Catalysis depends on residues histidine 384 and lysine 512.

It belongs to the GPI family.

It localises to the cytoplasm. The catalysed reaction is alpha-D-glucose 6-phosphate = beta-D-fructose 6-phosphate. The protein operates within carbohydrate biosynthesis; gluconeogenesis. Its pathway is carbohydrate degradation; glycolysis; D-glyceraldehyde 3-phosphate and glycerone phosphate from D-glucose: step 2/4. Functionally, catalyzes the reversible isomerization of glucose-6-phosphate to fructose-6-phosphate. This chain is Glucose-6-phosphate isomerase 1, found in Chromobacterium violaceum (strain ATCC 12472 / DSM 30191 / JCM 1249 / CCUG 213 / NBRC 12614 / NCIMB 9131 / NCTC 9757 / MK).